Consider the following 416-residue polypeptide: 46 kDa surface antigen (416 aa).

Positions Met-1 to Gly-27 are cleaved as a signal peptide. The N-palmitoyl cysteine moiety is linked to residue Cys-28. Cys-28 carries the S-diacylglycerol cysteine lipid modification.

Its subcellular location is the cell membrane. This chain is 46 kDa surface antigen (p46), found in Mesomycoplasma hyopneumoniae (strain 232) (Mycoplasma hyopneumoniae).